The primary structure comprises 308 residues: tRNA dimethylallyltransferase 2 (308 aa).

13–20 (GPTASGKT) provides a ligand contact to ATP. Position 15–20 (15–20 (TASGKT)) interacts with substrate. Residues 38 to 41 (DSRQ) form an interaction with substrate tRNA region.

Belongs to the IPP transferase family. As to quaternary structure, monomer. Requires Mg(2+) as cofactor.

The enzyme catalyses adenosine(37) in tRNA + dimethylallyl diphosphate = N(6)-dimethylallyladenosine(37) in tRNA + diphosphate. In terms of biological role, catalyzes the transfer of a dimethylallyl group onto the adenine at position 37 in tRNAs that read codons beginning with uridine, leading to the formation of N6-(dimethylallyl)adenosine (i(6)A). This is tRNA dimethylallyltransferase 2 from Bacteroides fragilis (strain YCH46).